The chain runs to 358 residues: Fructose-bisphosphate aldolase (358 aa).

S62 lines the D-glyceraldehyde 3-phosphate pocket. The Proton donor role is filled by D109. Zn(2+)-binding residues include H110, D144, E174, and H226. Dihydroxyacetone phosphate is bound at residue G227. Residue H264 participates in Zn(2+) binding. Dihydroxyacetone phosphate-binding positions include 265 to 267 (GGS) and 286 to 289 (NIDT).

Belongs to the class II fructose-bisphosphate aldolase family. The cofactor is Zn(2+).

It catalyses the reaction beta-D-fructose 1,6-bisphosphate = D-glyceraldehyde 3-phosphate + dihydroxyacetone phosphate. It participates in carbohydrate degradation; glycolysis; D-glyceraldehyde 3-phosphate and glycerone phosphate from D-glucose: step 4/4. Catalyzes the aldol condensation of dihydroxyacetone phosphate (DHAP or glycerone-phosphate) with glyceraldehyde 3-phosphate (G3P) to form fructose 1,6-bisphosphate (FBP) in gluconeogenesis and the reverse reaction in glycolysis. The polypeptide is Fructose-bisphosphate aldolase (fba) (Edwardsiella ictaluri (strain 93-146)).